The sequence spans 40 residues: Photosystem II reaction center protein J (40 aa).

The chain crosses the membrane as a helical span at residues 8-28 (IPLWLIGTLTGILVIGLIGIF).

It belongs to the PsbJ family. As to quaternary structure, PSII is composed of 1 copy each of membrane proteins PsbA, PsbB, PsbC, PsbD, PsbE, PsbF, PsbH, PsbI, PsbJ, PsbK, PsbL, PsbM, PsbT, PsbX, PsbY, PsbZ, Psb30/Ycf12, at least 3 peripheral proteins of the oxygen-evolving complex and a large number of cofactors. It forms dimeric complexes.

It localises to the plastid. Its subcellular location is the chloroplast thylakoid membrane. One of the components of the core complex of photosystem II (PSII). PSII is a light-driven water:plastoquinone oxidoreductase that uses light energy to abstract electrons from H(2)O, generating O(2) and a proton gradient subsequently used for ATP formation. It consists of a core antenna complex that captures photons, and an electron transfer chain that converts photonic excitation into a charge separation. This Phalaenopsis aphrodite subsp. formosana (Moth orchid) protein is Photosystem II reaction center protein J.